The primary structure comprises 245 residues: tRNA pseudouridine synthase A (245 aa).

Catalysis depends on Asp-52, which acts as the Nucleophile. Tyr-111 contacts substrate.

Belongs to the tRNA pseudouridine synthase TruA family. As to quaternary structure, homodimer.

The enzyme catalyses uridine(38/39/40) in tRNA = pseudouridine(38/39/40) in tRNA. In terms of biological role, formation of pseudouridine at positions 38, 39 and 40 in the anticodon stem and loop of transfer RNAs. This Rickettsia canadensis (strain McKiel) protein is tRNA pseudouridine synthase A.